Here is a 708-residue protein sequence, read N- to C-terminus: Matrix metalloproteinase-9 (708 aa).

A signal peptide spans 1–19 (MSPWQPLLLVLLALGYSFA). A propeptide spans 20 to 107 (APHQRQPTYV…PRCGVPDVGK (88 aa)) (activation peptide). N-linked (GlcNAc...) asparagine glycosylation occurs at Asn-39. Positions 98 to 105 (PRCGVPDV) match the Cysteine switch motif. A Zn(2+)-binding site is contributed by Cys-100. The N-linked (GlcNAc...) asparagine glycan is linked to Asn-121. Residues Asp-132 and Asp-166 each coordinate Ca(2+). 2 residues coordinate Zn(2+): His-176 and Asp-178. Ca(2+)-binding residues include Asp-183, Gly-184, Asp-186, and Leu-188. His-191 contributes to the Zn(2+) binding site. Residues Gly-198, Gln-200, and Asp-202 each coordinate Ca(2+). Position 204 (His-204) interacts with Zn(2+). The Ca(2+) site is built by Asp-206, Asp-207, and Glu-209. Fibronectin type-II domains lie at 226-274 (ANGA…FCPS), 284-332 (GDGK…FCPT), and 343-391 (SAGE…FCPD). 6 disulfides stabilise this stretch: Cys-231–Cys-257, Cys-245–Cys-272, Cys-289–Cys-315, Cys-303–Cys-330, Cys-348–Cys-374, and Cys-362–Cys-389. Zn(2+) is bound at residue His-402. Glu-403 is an active-site residue. Zn(2+) contacts are provided by His-406 and His-412. The tract at residues 441–520 (HHLYGRGSKP…SSTPDDNPCN (80 aa)) is disordered. The span at 480–490 (PTGGPTVAPTG) shows a compositional bias: low complexity. Residues 491 to 502 (APSPGPTGPPTA) are compositionally biased toward pro residues. A disulfide bond links Cys-519 and Cys-707. Hemopexin repeat units follow at residues 521–566 (VDVF…WPAF), 567–611 (PSKL…GLGS), 613–660 (VTLV…FSGV), and 661–707 (PWNS…LLQC).

This sequence belongs to the peptidase M10A family. In terms of assembly, exists as monomer or homodimer; disulfide-linked. Also exists as heterodimer with LCN2. Macrophages and transformed cell lines produce only the monomeric form. Interacts with ECM1. The cofactor is Zn(2+). Ca(2+) serves as cofactor. Post-translationally, N- and O-glycosylated.

It localises to the secreted. Its subcellular location is the extracellular space. It is found in the extracellular matrix. It catalyses the reaction Cleavage of gelatin types I and V and collagen types IV and V.. Matrix metalloproteinase that plays an essential role in local proteolysis of the extracellular matrix and in leukocyte migration. Could play a role in bone osteoclastic resorption. Cleaves KiSS1 at a Gly-|-Leu bond. Cleaves NINJ1 to generate the Secreted ninjurin-1 form. Cleaves type IV and type V collagen into large C-terminal three quarter fragments and shorter N-terminal one quarter fragments. Degrades fibronectin but not laminin or Pz-peptide. In Rattus norvegicus (Rat), this protein is Matrix metalloproteinase-9 (Mmp9).